We begin with the raw amino-acid sequence, 667 residues long: MTAAGLLIAIGIVYGDIGTSPLYVMKSVIAGNGGINTVGRDLIIGTISLILWTVTLLTTVQTVIIALRATNHGEGGIFALYALIRKKAAWLVWPALIGGAAILADGTLTPAVTVTTAIEGLKGLEFGKGNVPVSNQTTVLVITIVILLVLFSIQRMGTRIIGKAFGPIMLVWFAFLGVMGLINIGGNWWILQALNPYYAIKLLFSPYNKAGFAILGSIFLATTGAEALYSDVGHVGKGNIIGSWPFVFVCLSLNYFGQGVWILNNTNMHSATEINPFYAMIPENIRLASIVLATLAAIIASQALITGSFTLVAESINLKFLPRMNILYPSDERGQIYIPAVNKMLGITTIALVLFFRTSAHMEAAYGLSITISMLTTTILLYEWLVLKQGHNLANLLFVIFFSTINILFMGSSLSKFTHGGYVSLLITLLIASVMVVWYFGNKVRDQNGAGNAYVRLDEYTDMLTNLSHDDNYPTYSDNLVYMANVKYNKFIKREILYSILDKRPKRARAYWFVTVNVTNEPFTAEYAVNTFGTKNVINIQLYLGFKKQTSVNVYLRQIVHDLIKDNTIEAQPQEYTTTPGRDVGDFKFVIVNDVISPSTTLSSYKKWLVKARVQLQNLSLNPAQWFGLEFADMVIERVPLILGKQEHERIKRVAPVDYSKTSLNKK.

The next 12 helical transmembrane spans lie at 5–25 (GLLIAIGIVYGDIGTSPLYVM), 47–67 (ISLILWTVTLLTTVQTVIIAL), 88–108 (AAWLVWPALIGGAAILADGTL), 133–153 (VSNQTTVLVITIVILLVLFSI), 164–184 (AFGPIMLVWFAFLGVMGLINI), 210–230 (AGFAILGSIFLATTGAEALYS), 243–263 (SWPFVFVCLSLNYFGQGVWIL), 287–307 (LASIVLATLAAIIASQALITG), 336–356 (IYIPAVNKMLGITTIALVLFF), 367–387 (GLSITISMLTTTILLYEWLVL), 393–413 (LANLLFVIFFSTINILFMGSS), and 420–440 (GGYVSLLITLLIASVMVVWYF).

This sequence belongs to the HAK/KUP transporter (TC 2.A.72) family.

It localises to the cell membrane. The catalysed reaction is K(+)(in) + H(+)(in) = K(+)(out) + H(+)(out). Functionally, transport of potassium into the cell. Likely operates as a K(+):H(+) symporter. The sequence is that of Probable potassium transport system protein Kup from Lactobacillus delbrueckii subsp. bulgaricus (strain ATCC 11842 / DSM 20081 / BCRC 10696 / JCM 1002 / NBRC 13953 / NCIMB 11778 / NCTC 12712 / WDCM 00102 / Lb 14).